The following is a 190-amino-acid chain: Large ribosomal subunit protein uL22 (190 aa).

A disordered region spans residues 111–190 (SVQSTKAKAK…TKKKTEGEEK (80 aa)). Over residues 125–147 (IKSEDSKNSLKVTESKADSKVDA) the composition is skewed to basic and acidic residues. Positions 167-178 (AKVATTKSTATR) are enriched in low complexity.

It belongs to the universal ribosomal protein uL22 family. As to quaternary structure, part of the 50S ribosomal subunit.

This protein binds specifically to 23S rRNA; its binding is stimulated by other ribosomal proteins, e.g. L4, L17, and L20. It is important during the early stages of 50S assembly. It makes multiple contacts with different domains of the 23S rRNA in the assembled 50S subunit and ribosome. Functionally, the globular domain of the protein is located near the polypeptide exit tunnel on the outside of the subunit, while an extended beta-hairpin is found that lines the wall of the exit tunnel in the center of the 70S ribosome. The protein is Large ribosomal subunit protein uL22 of Helicobacter hepaticus (strain ATCC 51449 / 3B1).